A 241-amino-acid chain; its full sequence is Probable transcriptional regulatory protein lin1570 (241 aa).

A compositionally biased stretch (polar residues) spans 1–14 (MAGHSKWNNIQGRK). The segment at 1–22 (MAGHSKWNNIQGRKNAQDSKRS) is disordered.

It belongs to the TACO1 family.

The protein localises to the cytoplasm. The polypeptide is Probable transcriptional regulatory protein lin1570 (Listeria innocua serovar 6a (strain ATCC BAA-680 / CLIP 11262)).